Reading from the N-terminus, the 817-residue chain is Two pore calcium channel protein 1 (817 aa).

At 1–101 the chain is on the cytoplasmic side; sequence MSVILDDDVL…PKDARALAAY (101 aa). Positions 22–66 are disordered; sequence PLTPSNGLGQEDLPSKNGGGQSGPNSQVPSLVSGADSPPSSPPGH. Residues 102 to 122 form a helical membrane-spanning segment; the sequence is LFVHNHFFYMMELLTALLLLL. Over 123–137 the chain is Extracellular; it reads LSLCESPAVPALKLR. A helical transmembrane segment spans residues 138 to 158; it reads TYVHATLELFALMVVVFELCM. The Cytoplasmic portion of the chain corresponds to 159–172; it reads KLRWLGFHTFVRHK. Residues 173 to 193 form a helical membrane-spanning segment; the sequence is RTMVKTSVLVVQFIEAIVVLV. Residues 194-202 are Extracellular-facing; sequence RQTSHVRVT. A helical membrane pass occupies residues 203-221; sequence RALRCIFLVDCRYCGGVRR. The Cytoplasmic portion of the chain corresponds to 222-235; that stretch reads NLRQIFQSLPPFMD. The chain crosses the membrane as a helical span at residues 236–256; the sequence is ILLLLLFFMIIFAILGFYLFS. Residues 257 to 263 are Extracellular-facing; it reads TNPSDPY. Residues 264–287 constitute an intramembrane region (helical; Pore-forming); sequence FNTLENSIVNLFVLLTTANFPDVM. Residues 288–298 are Extracellular-facing; that stretch reads MPSYSRNPWSC. Residues 299 to 319 form a helical membrane-spanning segment; the sequence is VFFIVYLSIELYFIMNLLLAV. Residues 320–445 are Cytoplasmic-facing; that stretch reads VFDTFNDIEK…NILVNSKAFQ (126 aa). Residues 446–466 form a helical membrane-spanning segment; that stretch reads YFMYLVVAVNGVWILVETFML. Topologically, residues 467–480 are extracellular; it reads KGGNFISKHVPWSY. Residues 481-501 form a helical membrane-spanning segment; that stretch reads LVFLTIYGVELFMKVAGLGPV. Residues 502–504 lie on the Cytoplasmic side of the membrane; the sequence is EYL. The helical transmembrane segment at 505 to 527 threads the bilayer; that stretch reads SSGWNLFDFSVTAFAFLGLLALT. Residues 528-535 lie on the Extracellular side of the membrane; sequence LNMEPFYF. A helical membrane pass occupies residues 536 to 550; the sequence is IVVLRPLQLLRLFKL. Residues 551-574 are Cytoplasmic-facing; sequence KKRYRNVLDTMFELLPRMASLGLT. Residues 575–595 form a helical membrane-spanning segment; it reads LLTFYYSFAIVGMEFFSGRLS. Topologically, residues 596–630 are extracellular; sequence PNCCNSSTVADAYRFINHTVGNKTKVEEGYYYLNN. The segment at residues 631–654 is an intramembrane region (helical; Pore-forming); the sequence is FDNILNSFVTLFELTVVNNWYIIM. At 655 to 671 the chain is on the extracellular side; sequence EGVTSQTSHWSRLYFMT. A helical membrane pass occupies residues 672–692; that stretch reads FYIVTMVVMTIIVAFILEAFV. The Cytoplasmic portion of the chain corresponds to 693-817; sequence FRMNYSRKSQ…GSRQRSQTVT (125 aa). The stretch at 770 to 794 forms a coiled coil; sequence SLKMYQEEIQEWYEEHAREQEQQQL. Positions 785–817 are disordered; it reads HAREQEQQQLRGSAPSPAAQQTPGSRQRSQTVT. A compositionally biased stretch (polar residues) spans 802–817; sequence AAQQTPGSRQRSQTVT.

Belongs to the calcium channel alpha-1 subunit (TC 1.A.1.11) family. Two pore calcium channel subfamily. As to quaternary structure, dimer. Interacts with MTOR; the interaction is required for TPCN1 ATP sensitivity. Interacts with STX7, STX8 and STX12. Interacts with JPT2. Found in a complex with LSM12, TPCN1 and TPCN2. N-glycosylated. As to expression, widely expressed. Expressed at relatively high level in kidney, liver and lung, and in the kidney it is expressed at inner medullary collecting ducts.

Its subcellular location is the lysosome membrane. The protein resides in the endosome membrane. The protein localises to the early endosome membrane. It localises to the recycling endosome membrane. The enzyme catalyses Na(+)(in) = Na(+)(out). It catalyses the reaction Ca(2+)(in) = Ca(2+)(out). Na(+) current is inhibited by ATP in a MTORC-dependent manner. ATP sensitivity is independent of PI(3,5)P2. Probably regulated by Mg(2+) ions, cytosolic Mg(2+) selectively inhibits outward current while lysosomal Mg(2+) modestly inhibits both the outward and inward currents. In the absence of Mg(2+), NAADP readily activates TPCN2, with properties similar to PI(3,5)P2. Both current elicited by PI(3,5)P2 as well as NAADP are inhibited by tetrandrine. Its function is as follows. Intracellular channel initially characterized as a non-selective Ca(2+)-permeable channel activated by NAADP (nicotinic acid adenine dinucleotide phosphate), it is also a voltage-gated highly-selective Na(+) channel activated directly by PI(3,5)P2 (phosphatidylinositol 3,5-bisphosphate) that senses pH changes and confers electrical excitability to organelles. Localizes to the early and recycling endosomes membranes where it plays a role in the uptake and processing of proteins and regulates organellar membrane excitability, membrane trafficking and pH homeostasis. Ion selectivity is not fixed but rather agonist-dependent and under defined ionic conditions, can be readily activated by both NAADP and PI(3,5)P2. Required for mTOR-dependent nutrient sensing. The chain is Two pore calcium channel protein 1 (Tpcn1) from Rattus norvegicus (Rat).